The chain runs to 392 residues: WD repeat-containing protein GTS1 (392 aa).

WD repeat units lie at residues 81–124 (GHSD…QVSR), 128–167 (GNDQEIFSFSYGGAADNLLAGGCKEQVLLWDWRNSKQVAC), 171–211 (SHMD…NDDD), and 323–368 (GHID…TEIN).

As to expression, expressed in germinating seeds, rosettes leaves, flowers and siliques.

In terms of biological role, involved in the control of plant growth development. Acts as negative regulator of seed germination, cell division in meristematic regions, plant growth and overall biomass accumulation. May function by regulating ribosome activities and biogenesis in plant cells. The protein is WD repeat-containing protein GTS1 of Arabidopsis thaliana (Mouse-ear cress).